The chain runs to 172 residues: Melanocortin-2 receptor accessory protein (172 aa).

Residues 38–58 traverse the membrane as a helical segment; sequence IVIAFWVSLAAFVVLLFLILL. Disordered stretches follow at residues 105–136 and 151–172; these read QAQASSVEPGSRTGPDQPLRQESSSTLPLGGF and GPLVRSKPSEPPPGDRTSQLQS.

Belongs to the MRAP family. Homodimer and heterodimer. Forms antiparallel homodimers and heterodimers with MRAP2. Interacts with MC1R, MC2R, MC3R, MC4R and MC5R. As to expression, expressed in adrenal cortex, testis, breast, thyroid, lymph node, ovary and fat. Expressed in adipose tissues.

It is found in the cell membrane. The protein resides in the endoplasmic reticulum membrane. Modulator of melanocortin receptors (MC1R, MC2R, MC3R, MC4R and MC5R). Acts by increasing ligand-sensitivity of melanocortin receptors and enhancing generation of cAMP by the receptors. Required both for MC2R trafficking to the cell surface of adrenal cells and for signaling in response to corticotropin (ACTH). May be involved in the intracellular trafficking pathways in adipocyte cells. The polypeptide is Melanocortin-2 receptor accessory protein (MRAP) (Homo sapiens (Human)).